We begin with the raw amino-acid sequence, 218 residues long: Probable GTP-binding protein EngB (218 aa).

Positions 31–205 constitute an EngB-type G domain; it reads VGVEIAFAGR…LGILNEWCHP (175 aa). Residues 39 to 46, 66 to 70, 84 to 87, 151 to 154, and 184 to 186 contribute to the GTP site; these read GRSNAGKS, GRTQL, DLPG, TKCD, and FSS. Mg(2+) is bound by residues S46 and T68.

It belongs to the TRAFAC class TrmE-Era-EngA-EngB-Septin-like GTPase superfamily. EngB GTPase family. Requires Mg(2+) as cofactor.

Necessary for normal cell division and for the maintenance of normal septation. The polypeptide is Probable GTP-binding protein EngB (Shewanella loihica (strain ATCC BAA-1088 / PV-4)).